Reading from the N-terminus, the 165-residue chain is MEDLLVVGQIINTHGLRGEMKVMPLTEDMRRFDYLEYVILKGKKVKVEGVKYFKDKVILKLEGINSIEEAEKLKRTYLEIEREDAIELEEDEYFIVDLVGCTVVDTEGFEYGKIKDVIQTPSNDVYWVQGKKEVLVPVLKDIVLDINMDEKLITIRPSGEWQYED.

A PRC barrel domain is found at Glu-90 to Trp-161.

This sequence belongs to the RimM family. As to quaternary structure, binds ribosomal protein uS19.

The protein resides in the cytoplasm. Functionally, an accessory protein needed during the final step in the assembly of 30S ribosomal subunit, possibly for assembly of the head region. Essential for efficient processing of 16S rRNA. May be needed both before and after RbfA during the maturation of 16S rRNA. It has affinity for free ribosomal 30S subunits but not for 70S ribosomes. The polypeptide is Ribosome maturation factor RimM (Clostridium perfringens (strain ATCC 13124 / DSM 756 / JCM 1290 / NCIMB 6125 / NCTC 8237 / Type A)).